The chain runs to 329 residues: Phosphate acyltransferase (329 aa).

The protein belongs to the PlsX family. Homodimer. Probably interacts with PlsY.

It localises to the cytoplasm. The catalysed reaction is a fatty acyl-[ACP] + phosphate = an acyl phosphate + holo-[ACP]. It functions in the pathway lipid metabolism; phospholipid metabolism. Catalyzes the reversible formation of acyl-phosphate (acyl-PO(4)) from acyl-[acyl-carrier-protein] (acyl-ACP). This enzyme utilizes acyl-ACP as fatty acyl donor, but not acyl-CoA. The polypeptide is Phosphate acyltransferase (Exiguobacterium sp. (strain ATCC BAA-1283 / AT1b)).